The following is a 143-amino-acid chain: Spore coat protein P (143 aa).

A sHSP domain is found at 34–143 (FFDSEASTFV…VETVAFNKGL (110 aa)).

The protein belongs to the small heat shock protein (HSP20) family.

In Bacillus subtilis (strain 168), this protein is Spore coat protein P (cotP).